The following is a 229-amino-acid chain: Potassium/proton antiporter CemA (229 aa).

The next 3 membrane-spanning stretches (helical) occupy residues 7–27 (LTPLPYLASIVFLPWWISLSF), 106–126 (IILHFSTNIITLTILSGFFIM), and 189–209 (IISGLVSTFPVILDTILKYWI).

Belongs to the CemA family.

Its subcellular location is the plastid. The protein localises to the chloroplast inner membrane. The catalysed reaction is K(+)(in) + H(+)(out) = K(+)(out) + H(+)(in). In terms of biological role, contributes to K(+)/H(+) antiport activity by supporting proton efflux to control proton extrusion and homeostasis in chloroplasts in a light-dependent manner to modulate photosynthesis. Prevents excessive induction of non-photochemical quenching (NPQ) under continuous-light conditions. Indirectly promotes efficient inorganic carbon uptake into chloroplasts. This chain is Potassium/proton antiporter CemA, found in Ceratophyllum demersum (Rigid hornwort).